The sequence spans 763 residues: Phosphoglycerol transferase I (763 aa).

A run of 4 helical transmembrane segments spans residues 4–19, 26–48, 76–98, and 110–132; these read LLSV…IYAW, WWFA…LYAS, YILP…GWVL, and YSLL…RQIT.

This sequence belongs to the OpgB family.

It is found in the cell inner membrane. It carries out the reaction a phosphatidylglycerol + a membrane-derived-oligosaccharide D-glucose = a 1,2-diacyl-sn-glycerol + a membrane-derived-oligosaccharide 6-(glycerophospho)-D-glucose.. The protein operates within glycan metabolism; osmoregulated periplasmic glucan (OPG) biosynthesis. In terms of biological role, transfers a phosphoglycerol residue from phosphatidylglycerol to the membrane-bound nascent glucan backbones. The chain is Phosphoglycerol transferase I from Salmonella typhi.